Here is a 338-residue protein sequence, read N- to C-terminus: Nickel transporter NixA (338 aa).

Transmembrane regions (helical) follow at residues 11–31, 37–57, 79–99, 127–147, 187–207, 217–237, 266–286, and 307–327; these read WLPY…FLWI, HILF…AFDA, GVGF…AVFL, FFLV…INLF, VLPL…IALL, AISF…MSLL, ITAI…LQIL, and YLGY…SLIW.

Belongs to the NiCoT transporter (TC 2.A.52) family.

Its subcellular location is the cell membrane. Its function is as follows. Secondary nickel transporter. Required for full urease activity. In Staphylococcus aureus (strain NCTC 8325 / PS 47), this protein is Nickel transporter NixA.